The chain runs to 421 residues: D-amino acid dehydrogenase (421 aa).

Position 3–17 (Val-3–Tyr-17) interacts with FAD.

Belongs to the DadA oxidoreductase family. Requires FAD as cofactor.

The enzyme catalyses a D-alpha-amino acid + A + H2O = a 2-oxocarboxylate + AH2 + NH4(+). Its pathway is amino-acid degradation; D-alanine degradation; NH(3) and pyruvate from D-alanine: step 1/1. Oxidative deamination of D-amino acids. In Acinetobacter baumannii (strain ATCC 17978 / DSM 105126 / CIP 53.77 / LMG 1025 / NCDC KC755 / 5377), this protein is D-amino acid dehydrogenase.